The chain runs to 446 residues: Tubulin beta chain (446 aa).

The GTP site is built by Gln11, Glu69, Ser138, Gly142, Thr143, Gly144, Asn204, and Asn226. Glu69 serves as a coordination point for Mg(2+). Residues 425–446 (YQEASISEGEEEYPEEVSNEEE) form a disordered region. Positions 432–446 (EGEEEYPEEVSNEEE) are enriched in acidic residues.

This sequence belongs to the tubulin family. Dimer of alpha and beta chains. A typical microtubule is a hollow water-filled tube with an outer diameter of 25 nm and an inner diameter of 15 nM. Alpha-beta heterodimers associate head-to-tail to form protofilaments running lengthwise along the microtubule wall with the beta-tubulin subunit facing the microtubule plus end conferring a structural polarity. Microtubules usually have 13 protofilaments but different protofilament numbers can be found in some organisms and specialized cells. Mg(2+) is required as a cofactor.

It localises to the cytoplasm. Its subcellular location is the cytoskeleton. Tubulin is the major constituent of microtubules, a cylinder consisting of laterally associated linear protofilaments composed of alpha- and beta-tubulin heterodimers. Microtubules grow by the addition of GTP-tubulin dimers to the microtubule end, where a stabilizing cap forms. Below the cap, tubulin dimers are in GDP-bound state, owing to GTPase activity of alpha-tubulin. The polypeptide is Tubulin beta chain (TUB2) (Blumeria hordei (Barley powdery mildew)).